A 451-amino-acid polypeptide reads, in one-letter code: PTS system galactitol-specific EIIC component (451 aa).

One can recognise a PTS EIIC type-2 domain in the interval 6–435 (MRYILDLGPT…IYLTGIFMTW (430 aa)). 10 consecutive transmembrane segments (helical) span residues 9–29 (ILDLGPTVMLPIVIIIFSKIL), 41–61 (LHIGIGFVGIGLVIGLMLDSI), 92–112 (ASQIALVAIPIAILVNVAMLL), 138–158 (LATGSWMIGMAGVVIHAAFVY), 218–238 (FGPFGEPVTVGFVMGLIIGIL), 305–325 (AVVSASLIFIPLTILIAVCVP), 329–349 (VLPFGDLATIGFFVAMAVAVH), 357–377 (LISGVIIMSITLWIATQTIGL), 392–412 (GMVASMDQGGSPITWLLIQVF), and 415–435 (QNIPGFIIIGAIYLTGIFMTW).

Forms a complex with one each of subunit of GatA, GatB and 2 subunits of GatC.

It localises to the cell inner membrane. The phosphoenolpyruvate-dependent sugar phosphotransferase system (PTS), a major carbohydrate active transport system, catalyzes the phosphorylation of incoming sugar substrates concomitant with their translocation across the cell membrane. The enzyme II complex composed of GatA, GatB and GatC is involved in galactitol transport. The chain is PTS system galactitol-specific EIIC component (gatC) from Escherichia coli O157:H7.